Consider the following 194-residue polypeptide: Protein phosphatase 1 regulatory subunit 1B (194 aa).

At Met1 the chain carries N-acetylmethionine. A disordered region spans residues 1–194 (MDPKDRKKIQ…GEEPQHPSPP (194 aa)). Thr34 carries the post-translational modification Phosphothreonine; by PKA. Residues 41–63 (VSEHSSPEEEASPHQRTSGEGHH) show a composition bias toward basic and acidic residues. Residues Ser45 and Ser46 each carry the phosphoserine modification. Thr75 carries the phosphothreonine modification. The segment covering 84–95 (HLQTISNLSENQ) has biased composition (polar residues). A phosphoserine mark is found at Ser97 and Ser130. The segment covering 113–131 (QEDDEEDEDEEEDEEEDSQ) has biased composition (acidic residues). Residues 160–170 (PPLDEPQRDGN) are compositionally biased toward basic and acidic residues. Ser192 bears the Phosphoserine mark.

This sequence belongs to the protein phosphatase inhibitor 1 family. In terms of processing, dopamine- and cyclic AMP-regulated neuronal phosphoprotein. Post-translationally, phosphorylation of Thr-34 is required for activity.

The protein localises to the cytoplasm. In terms of biological role, inhibitor of protein-phosphatase 1. The sequence is that of Protein phosphatase 1 regulatory subunit 1B (Ppp1r1b) from Mus musculus (Mouse).